The primary structure comprises 103 residues: Pyrimidine/purine nucleoside phosphorylase (103 aa).

This sequence belongs to the nucleoside phosphorylase PpnP family.

The catalysed reaction is a purine D-ribonucleoside + phosphate = a purine nucleobase + alpha-D-ribose 1-phosphate. The enzyme catalyses adenosine + phosphate = alpha-D-ribose 1-phosphate + adenine. It catalyses the reaction cytidine + phosphate = cytosine + alpha-D-ribose 1-phosphate. It carries out the reaction guanosine + phosphate = alpha-D-ribose 1-phosphate + guanine. The catalysed reaction is inosine + phosphate = alpha-D-ribose 1-phosphate + hypoxanthine. The enzyme catalyses thymidine + phosphate = 2-deoxy-alpha-D-ribose 1-phosphate + thymine. It catalyses the reaction uridine + phosphate = alpha-D-ribose 1-phosphate + uracil. It carries out the reaction xanthosine + phosphate = alpha-D-ribose 1-phosphate + xanthine. Its function is as follows. Catalyzes the phosphorolysis of diverse nucleosides, yielding D-ribose 1-phosphate and the respective free bases. Can use uridine, adenosine, guanosine, cytidine, thymidine, inosine and xanthosine as substrates. Also catalyzes the reverse reactions. The protein is Pyrimidine/purine nucleoside phosphorylase of Shewanella denitrificans (strain OS217 / ATCC BAA-1090 / DSM 15013).